The sequence spans 188 residues: Peptidyl-tRNA hydrolase (188 aa).

Phe15 is a tRNA binding site. The active-site Proton acceptor is His20. Positions 64, 66, and 112 each coordinate tRNA.

Belongs to the PTH family. In terms of assembly, monomer.

It localises to the cytoplasm. The catalysed reaction is an N-acyl-L-alpha-aminoacyl-tRNA + H2O = an N-acyl-L-amino acid + a tRNA + H(+). In terms of biological role, hydrolyzes ribosome-free peptidyl-tRNAs (with 1 or more amino acids incorporated), which drop off the ribosome during protein synthesis, or as a result of ribosome stalling. Its function is as follows. Catalyzes the release of premature peptidyl moieties from peptidyl-tRNA molecules trapped in stalled 50S ribosomal subunits, and thus maintains levels of free tRNAs and 50S ribosomes. The sequence is that of Peptidyl-tRNA hydrolase from Borrelia duttonii (strain Ly).